We begin with the raw amino-acid sequence, 406 residues long: Argininosuccinate synthase (406 aa).

ATP contacts are provided by residues 11-19 (AYSGGLDTS) and A38. L-citrulline is bound by residues Y91 and S96. G121 lines the ATP pocket. Residues T123, N127, and D128 each contribute to the L-aspartate site. Residue N127 coordinates L-citrulline. L-citrulline-binding residues include R131, S182, S191, E267, and Y279.

Belongs to the argininosuccinate synthase family. Type 1 subfamily. Homotetramer.

The protein resides in the cytoplasm. The enzyme catalyses L-citrulline + L-aspartate + ATP = 2-(N(omega)-L-arginino)succinate + AMP + diphosphate + H(+). It functions in the pathway amino-acid biosynthesis; L-arginine biosynthesis; L-arginine from L-ornithine and carbamoyl phosphate: step 2/3. The chain is Argininosuccinate synthase from Rhodospirillum centenum (strain ATCC 51521 / SW).